We begin with the raw amino-acid sequence, 800 residues long: N,N'-diacetylchitobiose phosphorylase (800 aa).

6 residues coordinate N-acetyl-alpha-D-glucosamine 1-phosphate: Arg-333, Arg-343, Arg-349, Asp-350, Trp-490, and Asp-492. Asp-492 serves as the catalytic Proton donor. 3 residues coordinate N-acetyl-D-glucosamine: Asp-492, Lys-636, and Glu-637. 5 residues coordinate N-acetyl-alpha-D-glucosamine 1-phosphate: Glu-637, His-644, Gln-690, Thr-709, and Gly-710.

This sequence belongs to the glycosyl hydrolase 94 family. In terms of assembly, homodimer.

It carries out the reaction N,N'-diacetylchitobiose + phosphate = N-acetyl-alpha-D-glucosamine 1-phosphate + N-acetyl-D-glucosamine. Catalyzes the reversible phosphorolysis of chitobiose (N,N'-diacetylchitobiose or (GlcNAc)(2)) into N-acetyl-alpha-D-glucosamine 1-phosphate (GlcNAc-1-P) and N-acetyl-D-glucosamine (GlcNAc) with inversion of the anomeric configuration. The polypeptide is N,N'-diacetylchitobiose phosphorylase (Vibrio furnissii).